Reading from the N-terminus, the 553-residue chain is Probable malate:quinone oxidoreductase (553 aa).

The span at 534–543 shows a compositional bias: low complexity; it reads QLKPQVQPQP. The disordered stretch occupies residues 534 to 553; that stretch reads QLKPQVQPQPAHKAVADIAL.

Belongs to the MQO family. FAD is required as a cofactor.

It catalyses the reaction (S)-malate + a quinone = a quinol + oxaloacetate. The protein operates within carbohydrate metabolism; tricarboxylic acid cycle; oxaloacetate from (S)-malate (quinone route): step 1/1. The sequence is that of Probable malate:quinone oxidoreductase from Citrobacter koseri (strain ATCC BAA-895 / CDC 4225-83 / SGSC4696).